The sequence spans 259 residues: Nodulation protein J (259 aa).

Residues 30 to 256 (ASILGNLADP…LVSTALLRRR (227 aa)) enclose the ABC transmembrane type-2 domain. A run of 6 helical transmembrane segments spans residues 32–52 (ILGNLADPVIYLFGLGAGLGV), 64–84 (AFLAAGMIATSAMTAATFETI), 116–136 (AWAATKASLAGTGIGIVAAML), 141–161 (WLALLYALPVIAITGLAFASL), 174–194 (YFIFYQTLVITPMLFLSGAVF), and 228–248 (IANVCLHIGVLCIYIVVPFLV).

This sequence belongs to the ABC-2 integral membrane protein family. Lipooligosaccharide exporter (TC 3.A.1.102) subfamily. In terms of assembly, the complex is composed of two ATP-binding proteins (NodI) and two transmembrane proteins (NodJ).

The protein resides in the cell inner membrane. In terms of biological role, part of the ABC transporter complex NodIJ involved in the export of the nodulation factors (Nod factors), the bacterial signal molecules that induce symbiosis and subsequent nodulation induction. Nod factors are LCO (lipo-chitin oligosaccharide), a modified beta-1,4-linked N-acetylglucosamine oligosaccharide. This subunit encodes the transporter. This Rhizobium leguminosarum bv. viciae protein is Nodulation protein J (nodJ).